Consider the following 578-residue polypeptide: E3 ubiquitin-protein ligase hrd-like protein 1 (578 aa).

The chain crosses the membrane as a helical span at residues Gly32–Phe52. Asn68 carries an N-linked (GlcNAc...) asparagine glycan. A run of 7 helical transmembrane segments spans residues Phe76 to Leu96, Leu101 to Ile121, Val134 to Val154, Val163 to Thr183, Ser202 to Phe222, Pro230 to Phe250, and Phe286 to Phe306. The segment at Cys350–Arg388 adopts an RING-type; atypical zinc-finger fold. Positions Gln447–Met489 constitute a CUE domain. Asn492 is a glycosylation site (N-linked (GlcNAc...) asparagine).

Its subcellular location is the membrane. In terms of biological role, proposed to have a role in neuroprotection. The sequence is that of E3 ubiquitin-protein ligase hrd-like protein 1 from Caenorhabditis briggsae.